Consider the following 154-residue polypeptide: Endoribonuclease YbeY (154 aa).

Residues His114, His118, and His124 each coordinate Zn(2+).

The protein belongs to the endoribonuclease YbeY family. Requires Zn(2+) as cofactor.

The protein localises to the cytoplasm. Single strand-specific metallo-endoribonuclease involved in late-stage 70S ribosome quality control and in maturation of the 3' terminus of the 16S rRNA. This chain is Endoribonuclease YbeY, found in Histophilus somni (strain 2336) (Haemophilus somnus).